The sequence spans 641 residues: Transcriptional activator of proteases prtT (641 aa).

The zn(2)-C6 fungal-type DNA-binding region spans 52–81; it reads CNTCRKLKTRCDLDPRGHACRRCLSLRIDC.

It belongs to the prtT family.

The protein resides in the nucleus. Functionally, transcription factor required for protein utilization and degradation. Regulates transcription of major secreted proteases including a serine alkaline protease (alp1) and a metalloprotease (NpI). The sequence is that of Transcriptional activator of proteases prtT (prtT) from Aspergillus oryzae (strain ATCC 42149 / RIB 40) (Yellow koji mold).